Here is a 384-residue protein sequence, read N- to C-terminus: Probable zinc-binding alcohol dehydrogenase Rv1895 (384 aa).

6 residues coordinate Zn(2+): Cys38, His59, Cys89, Cys92, Cys95, and Cys103.

This sequence belongs to the zinc-containing alcohol dehydrogenase family. Zn(2+) serves as cofactor.

The enzyme catalyses a primary alcohol + NAD(+) = an aldehyde + NADH + H(+). The catalysed reaction is a secondary alcohol + NAD(+) = a ketone + NADH + H(+). This chain is Probable zinc-binding alcohol dehydrogenase Rv1895, found in Mycobacterium tuberculosis (strain ATCC 25618 / H37Rv).